The chain runs to 68 residues: Non-specific lipid-transfer protein 2 (68 aa).

Belongs to the plant LTP family.

Plant non-specific lipid-transfer proteins transfer phospholipids as well as galactolipids across membranes. May play a role in wax or cutin deposition in the cell walls of expanding epidermal cells and certain secretory tissues. This is Non-specific lipid-transfer protein 2 from Prunus armeniaca (Apricot).